A 494-amino-acid polypeptide reads, in one-letter code: Ketol-acid reductoisomerase (NADP(+)) (494 aa).

One can recognise a KARI N-terminal Rossmann domain in the interval 14–208 (LDQLGRCRFM…GGHRAGVLES (195 aa)). Residues 45 to 48 (CGAQ), Arg-68, Arg-76, Ser-78, and 108 to 110 (DKQ) contribute to the NADP(+) site. His-132 is a catalytic residue. Gly-158 provides a ligand contact to NADP(+). KARI C-terminal knotted domains lie at 209-344 (SFVA…NYPV) and 345-487 (TDVE…MTDM). The Mg(2+) site is built by Asp-217, Glu-221, Glu-389, and Glu-393. Substrate is bound at residue Ser-414.

The protein belongs to the ketol-acid reductoisomerase family. The cofactor is Mg(2+).

The enzyme catalyses (2R)-2,3-dihydroxy-3-methylbutanoate + NADP(+) = (2S)-2-acetolactate + NADPH + H(+). The catalysed reaction is (2R,3R)-2,3-dihydroxy-3-methylpentanoate + NADP(+) = (S)-2-ethyl-2-hydroxy-3-oxobutanoate + NADPH + H(+). The protein operates within amino-acid biosynthesis; L-isoleucine biosynthesis; L-isoleucine from 2-oxobutanoate: step 2/4. It participates in amino-acid biosynthesis; L-valine biosynthesis; L-valine from pyruvate: step 2/4. Involved in the biosynthesis of branched-chain amino acids (BCAA). Catalyzes an alkyl-migration followed by a ketol-acid reduction of (S)-2-acetolactate (S2AL) to yield (R)-2,3-dihydroxy-isovalerate. In the isomerase reaction, S2AL is rearranged via a Mg-dependent methyl migration to produce 3-hydroxy-3-methyl-2-ketobutyrate (HMKB). In the reductase reaction, this 2-ketoacid undergoes a metal-dependent reduction by NADPH to yield (R)-2,3-dihydroxy-isovalerate. The protein is Ketol-acid reductoisomerase (NADP(+)) of Photobacterium profundum (strain SS9).